The chain runs to 303 residues: Oxygen-dependent coproporphyrinogen-III oxidase (303 aa).

Residue S93 coordinates substrate. H97 and H107 together coordinate a divalent metal cation. H107 serves as the catalytic Proton donor. 109 to 111 provides a ligand contact to substrate; the sequence is NVR. A divalent metal cation is bound by residues H149 and H179. Positions 244 to 279 are important for dimerization; that stretch reads YVEFNLVFDRGTLFGLQSGGRTESILLSMPPLAQWR. 262–264 is a substrate binding site; sequence GGR.

Belongs to the aerobic coproporphyrinogen-III oxidase family. In terms of assembly, homodimer. Requires a divalent metal cation as cofactor.

The protein resides in the cytoplasm. The catalysed reaction is coproporphyrinogen III + O2 + 2 H(+) = protoporphyrinogen IX + 2 CO2 + 2 H2O. Its pathway is porphyrin-containing compound metabolism; protoporphyrin-IX biosynthesis; protoporphyrinogen-IX from coproporphyrinogen-III (O2 route): step 1/1. In terms of biological role, involved in the heme biosynthesis. Catalyzes the aerobic oxidative decarboxylation of propionate groups of rings A and B of coproporphyrinogen-III to yield the vinyl groups in protoporphyrinogen-IX. The sequence is that of Oxygen-dependent coproporphyrinogen-III oxidase from Bordetella parapertussis (strain 12822 / ATCC BAA-587 / NCTC 13253).